A 227-amino-acid chain; its full sequence is ATP-dependent dethiobiotin synthetase BioD (227 aa).

12 to 17 provides a ligand contact to ATP; sequence DAGKTH. Mg(2+) is bound at residue Thr-16. Lys-37 is a catalytic residue. Ser-41 is a binding site for substrate. Residues Asp-54, 116–119, 176–177, and 205–207 each bind ATP; these read EGAG, NQ, and PYS. Residues Asp-54 and Glu-116 each coordinate Mg(2+).

This sequence belongs to the dethiobiotin synthetase family. Homodimer. Mg(2+) serves as cofactor.

Its subcellular location is the cytoplasm. The enzyme catalyses (7R,8S)-7,8-diammoniononanoate + CO2 + ATP = (4R,5S)-dethiobiotin + ADP + phosphate + 3 H(+). The protein operates within cofactor biosynthesis; biotin biosynthesis; biotin from 7,8-diaminononanoate: step 1/2. Functionally, catalyzes a mechanistically unusual reaction, the ATP-dependent insertion of CO2 between the N7 and N8 nitrogen atoms of 7,8-diaminopelargonic acid (DAPA, also called 7,8-diammoniononanoate) to form a ureido ring. The protein is ATP-dependent dethiobiotin synthetase BioD of Pseudoalteromonas translucida (strain TAC 125).